A 220-amino-acid polypeptide reads, in one-letter code: Deoxyribose-phosphate aldolase (220 aa).

The active-site Proton donor/acceptor is the aspartate 89. The Schiff-base intermediate with acetaldehyde role is filled by lysine 151. Lysine 180 serves as the catalytic Proton donor/acceptor.

Belongs to the DeoC/FbaB aldolase family. DeoC type 1 subfamily.

The protein localises to the cytoplasm. The catalysed reaction is 2-deoxy-D-ribose 5-phosphate = D-glyceraldehyde 3-phosphate + acetaldehyde. It participates in carbohydrate degradation; 2-deoxy-D-ribose 1-phosphate degradation; D-glyceraldehyde 3-phosphate and acetaldehyde from 2-deoxy-alpha-D-ribose 1-phosphate: step 2/2. Catalyzes a reversible aldol reaction between acetaldehyde and D-glyceraldehyde 3-phosphate to generate 2-deoxy-D-ribose 5-phosphate. The protein is Deoxyribose-phosphate aldolase of Macrococcus caseolyticus (strain JCSC5402) (Macrococcoides caseolyticum).